We begin with the raw amino-acid sequence, 504 residues long: Probable protein phosphatase 2C 18 (504 aa).

Residues 1–49 (MGLCYSVDRTTGKEPGEASSTATTAETVEERSGSGRWRRPRDLKGGGDI) form a disordered region. A compositionally biased stretch (low complexity) spans 17 to 26 (EASSTATTAE). The PPM-type phosphatase domain occupies 67-399 (IACLYTQQGK…DDCTVVCLFL (333 aa)). 4 residues coordinate Mn(2+): aspartate 103, glycine 104, aspartate 344, and aspartate 390. The segment at 410 to 435 (TNVKKDSPKEESIESVTNSTSKEEDE) is disordered. The segment covering 412–421 (VKKDSPKEES) has biased composition (basic and acidic residues).

Belongs to the PP2C family. It depends on Mg(2+) as a cofactor. Mn(2+) is required as a cofactor.

It catalyses the reaction O-phospho-L-seryl-[protein] + H2O = L-seryl-[protein] + phosphate. It carries out the reaction O-phospho-L-threonyl-[protein] + H2O = L-threonyl-[protein] + phosphate. This Arabidopsis thaliana (Mouse-ear cress) protein is Probable protein phosphatase 2C 18.